The chain runs to 420 residues: Serine/threonine-protein kinase PCRK2 (420 aa).

The tract at residues 1 to 64 (MKCFLFPLGD…SNTSMSAREN (64 aa)) is disordered. Polar residues predominate over residues 22-36 (SPTSNFSDVNKSGSD). Positions 42–58 (VSGTSTVSSTGRNSNTS) are enriched in low complexity. The residue at position 70 (T70) is a Phosphothreonine. Positions 81–366 (FSRSGMIGEG…EVLEMVTKIV (286 aa)) constitute a Protein kinase domain. Residues 87–95 (IGEGGFGCV) and K115 each bind ATP. Y164 is subject to Phosphotyrosine. D215 acts as the Proton acceptor in catalysis. Phosphoserine occurs at positions 219 and 249. 2 positions are modified to phosphothreonine: T250 and T255. Residue Y263 is modified to Phosphotyrosine. A disordered region spans residues 369–396 (SSPGNGGKKPQLVPLKSQETSRVEEGKN). Over residues 387–396 (ETSRVEEGKN) the composition is skewed to basic and acidic residues.

This sequence belongs to the protein kinase superfamily. Ser/Thr protein kinase family. As to quaternary structure, interacts with FLS2.

The protein resides in the cell membrane. The enzyme catalyses L-seryl-[protein] + ATP = O-phospho-L-seryl-[protein] + ADP + H(+). The catalysed reaction is L-threonyl-[protein] + ATP = O-phospho-L-threonyl-[protein] + ADP + H(+). Functions redundantly with PCRK1 in basal resistance against bacterial pathogens and in regulation of plant immunity. Functions together with PCRK1 downstream of the pathogen-associated molecular pattern (PAMP) receptor FLS2. Contributes to the induction of SARD1 and CBP60G, which are transcriptional activator of ICS1, an enzyme involved in salicylate (SA) biosynthesis upon pathogen attack. The sequence is that of Serine/threonine-protein kinase PCRK2 from Arabidopsis thaliana (Mouse-ear cress).